The primary structure comprises 311 residues: 4-diphosphocytidyl-2-C-methyl-D-erythritol kinase (311 aa).

Residue Lys9 is part of the active site. ATP is bound at residue 95–105 (PLGAGLAGGST). The active site involves Asp137.

The protein belongs to the GHMP kinase family. IspE subfamily.

It catalyses the reaction 4-CDP-2-C-methyl-D-erythritol + ATP = 4-CDP-2-C-methyl-D-erythritol 2-phosphate + ADP + H(+). The protein operates within isoprenoid biosynthesis; isopentenyl diphosphate biosynthesis via DXP pathway; isopentenyl diphosphate from 1-deoxy-D-xylulose 5-phosphate: step 3/6. Functionally, catalyzes the phosphorylation of the position 2 hydroxy group of 4-diphosphocytidyl-2C-methyl-D-erythritol. The protein is 4-diphosphocytidyl-2-C-methyl-D-erythritol kinase of Thermosynechococcus vestitus (strain NIES-2133 / IAM M-273 / BP-1).